Reading from the N-terminus, the 240-residue chain is ATP-dependent dethiobiotin synthetase BioD (240 aa).

15-20 (EIGKTF) is a binding site for ATP. Threonine 19 lines the Mg(2+) pocket. The active site involves lysine 40. ATP-binding positions include aspartate 57, 118 to 121 (EGVG), and 178 to 179 (NR). The Mg(2+) site is built by aspartate 57 and glutamate 118.

Belongs to the dethiobiotin synthetase family. As to quaternary structure, homodimer. It depends on Mg(2+) as a cofactor.

The protein resides in the cytoplasm. It carries out the reaction (7R,8S)-7,8-diammoniononanoate + CO2 + ATP = (4R,5S)-dethiobiotin + ADP + phosphate + 3 H(+). The protein operates within cofactor biosynthesis; biotin biosynthesis; biotin from 7,8-diaminononanoate: step 1/2. In terms of biological role, catalyzes a mechanistically unusual reaction, the ATP-dependent insertion of CO2 between the N7 and N8 nitrogen atoms of 7,8-diaminopelargonic acid (DAPA, also called 7,8-diammoniononanoate) to form a ureido ring. This Burkholderia pseudomallei (strain K96243) protein is ATP-dependent dethiobiotin synthetase BioD.